The sequence spans 148 residues: HTH-type transcriptional regulator BilQ (148 aa).

Residues Met-1–Asp-140 form the HTH marR-type domain. The H-T-H motif DNA-binding region spans Leu-54 to Gln-77.

In terms of biological role, transcription regulator that regulates expression of the bilirubin reductase operon (bilQ, bilR and bilS). The protein is HTH-type transcriptional regulator BilQ of Clostridioides difficile (strain CD3).